The sequence spans 131 residues: UPF0102 protein YraN (131 aa).

The span at 1-19 (MATVPTRSGSPRQLTTKQT) shows a compositional bias: polar residues. The segment at 1–21 (MATVPTRSGSPRQLTTKQTGD) is disordered.

Belongs to the UPF0102 family.

The chain is UPF0102 protein YraN from Shigella flexneri serotype 5b (strain 8401).